Reading from the N-terminus, the 277-residue chain is Phosphate import ATP-binding protein PstB (277 aa).

The ABC transporter domain occupies 31 to 272 (IEVPGLSLFY…PAKKQTEDYI (242 aa)). ATP is bound at residue 63-70 (GPSGCGKS).

This sequence belongs to the ABC transporter superfamily. Phosphate importer (TC 3.A.1.7) family. As to quaternary structure, the complex is composed of two ATP-binding proteins (PstB), two transmembrane proteins (PstC and PstA) and a solute-binding protein (PstS).

The protein resides in the cell inner membrane. The enzyme catalyses phosphate(out) + ATP + H2O = ADP + 2 phosphate(in) + H(+). In terms of biological role, part of the ABC transporter complex PstSACB involved in phosphate import. Responsible for energy coupling to the transport system. The polypeptide is Phosphate import ATP-binding protein PstB (Pseudomonas fluorescens (strain Pf0-1)).